The chain runs to 444 residues: Argininosuccinate synthase (444 aa).

ATP-binding positions include 18–26 (AFSGGLDTS) and Ala-44. Tyr-100 serves as a coordination point for L-citrulline. Positions 130 and 132 each coordinate ATP. The L-aspartate site is built by Thr-132, Asn-136, and Asp-137. Asn-136 contacts L-citrulline. Asp-137 provides a ligand contact to ATP. 2 residues coordinate L-citrulline: Arg-140 and Ser-193. Asp-195 contacts ATP. L-citrulline-binding residues include Thr-202, Glu-204, and Glu-281.

It belongs to the argininosuccinate synthase family. Type 2 subfamily. As to quaternary structure, homotetramer.

It localises to the cytoplasm. The enzyme catalyses L-citrulline + L-aspartate + ATP = 2-(N(omega)-L-arginino)succinate + AMP + diphosphate + H(+). It participates in amino-acid biosynthesis; L-arginine biosynthesis; L-arginine from L-ornithine and carbamoyl phosphate: step 2/3. The protein is Argininosuccinate synthase of Mannheimia succiniciproducens (strain KCTC 0769BP / MBEL55E).